Consider the following 492-residue polypeptide: Trehalose-phosphatase (492 aa).

A disordered region spans residues 1 to 55 (MTETVTDQGKQRSSKLQKNEAAKDEQVEGKGKETLESGTDKSAEQNSSLLVGQPD). The span at 17-43 (QKNEAAKDEQVEGKGKETLESGTDKSA) shows a compositional bias: basic and acidic residues. Positions 213 and 215 each coordinate Mg(2+). Residue Asp215 is the Proton donor/acceptor of the active site. 332 to 334 (QRK) is a substrate binding site. Position 424 (Asp424) interacts with Mg(2+).

Belongs to the gob-1 trehalose phosphatase family. Requires Mg(2+) as cofactor.

The enzyme catalyses alpha,alpha-trehalose 6-phosphate + H2O = alpha,alpha-trehalose + phosphate. With respect to regulation, inhibited by trehalose 6-sulfate. Functionally, catalyzes the hydrolysis of trehalose 6-phosphate to trehalose and phosphate; prevents the accumulation of toxic levels of trehalose 6-phosphate. The polypeptide is Trehalose-phosphatase (Brugia malayi (Filarial nematode worm)).